A 468-amino-acid chain; its full sequence is Pancreatic lipase-related protein 2 (468 aa).

The first 16 residues, M1–G16, serve as a signal peptide directing secretion. A disulfide bridge links C20 with C26. The interval V92–L104 is required for galactolipase activity. The cysteines at positions 108 and 119 are disulfide-linked. S170 acts as the Nucleophile in catalysis. The Charge relay system role is filled by D194. Residues E205, R208, D210, and D213 each contribute to the Ca(2+) site. C255 and C279 are joined by a disulfide. The segment at Q256 to A278 is required for galactolipase activity. The active-site Charge relay system is the H281. Intrachain disulfides connect C303–C314 and C317–C322. 2 N-linked (GlcNAc...) asparagine glycosylation sites follow: N352 and N427. One can recognise a PLAT domain in the interval W356–C468. C452 and C468 are joined by a disulfide.

The protein belongs to the AB hydrolase superfamily. Lipase family. In terms of tissue distribution, expressed in pancreatic acinar cells (at protein level).

It localises to the secreted. The protein resides in the zymogen granule membrane. Its subcellular location is the cell projection. It is found in the neuron projection. The catalysed reaction is a triacylglycerol + H2O = a diacylglycerol + a fatty acid + H(+). It catalyses the reaction a 1,2-diacyl-3-O-(beta-D-galactosyl)-sn-glycerol + 2 H2O = 3-beta-D-galactosyl-sn-glycerol + 2 a fatty acid + 2 H(+). The enzyme catalyses 1,2,3-tri-(9Z-octadecenoyl)-glycerol + H2O = di-(9Z)-octadecenoylglycerol + (9Z)-octadecenoate + H(+). It carries out the reaction di-(9Z)-octadecenoylglycerol + H2O = (9Z-octadecenoyl)-glycerol + (9Z)-octadecenoate + H(+). The catalysed reaction is (9Z-octadecenoyl)-glycerol + H2O = glycerol + (9Z)-octadecenoate + H(+). It catalyses the reaction 1-(9Z-octadecenoyl)-glycerol + H2O = glycerol + (9Z)-octadecenoate + H(+). The enzyme catalyses 1,2,3-tripropanoylglycerol + H2O = dipropanoylglycerol + propanoate + H(+). It carries out the reaction 1,2,3-tributanoylglycerol + H2O = dibutanoylglycerol + butanoate + H(+). The catalysed reaction is 1,2,3-trioctanoylglycerol + H2O = dioctanoylglycerol + octanoate + H(+). It catalyses the reaction 1,2-didecanoylglycerol + H2O = decanoylglycerol + decanoate + H(+). The enzyme catalyses long chain 1,2-diacyl-3-O-beta-D-galactosyl-sn-glycerol + H2O = long chain acyl-3-O-beta-D-galactosyl-sn-glycerol + a fatty acid + H(+). It carries out the reaction 1,2-dioctanoyl-3-O-beta-D-galactosyl-sn-glycerol + H2O = octanoyl-3-(beta-D-galactosyl)-sn-glycerol + octanoate + H(+). The catalysed reaction is 1,2-didodecanoyl-3-beta-D-galactosyl-sn-glycerol + H2O = dodecanoyl-3-beta-D-galactosyl-sn-glycerol + dodecanoate + H(+). It catalyses the reaction 1-beta-D-galactosyl-2,3-didodecanoyl-sn-glycerol + H2O = 1-beta-D-galactosyl-dodecanoyl-sn-glycerol + dodecanoate + H(+). The enzyme catalyses a 1,2-diacyl-3-O-[alpha-D-galactosyl-(1-&gt;6)-beta-D-galactosyl]-sn-glycerol + H2O = acyl-3-O-[alpha-D-galactosyl-(1-&gt;6)-beta-D-galactosyl]-sn-glycerol + a fatty acid + H(+). It carries out the reaction long chain 1,2-diacyl-3-O-[alpha-D-galactosyl-(1-&gt;6)-beta-D-galactosyl]-sn-glycerol + H2O = long chain acyl-3-O-[alpha-D-galactosyl-(1-&gt;6)-beta-D-galactosyl]-sn-glycerol + a fatty acid + H(+). The catalysed reaction is 1,2-dioctanoyl-3-O-[alpha-D-galactosyl-(1-&gt;6)-beta-D-galactosyl]-sn-glycerol + H2O = octanoyl-3-O-[alpha-D-galactosyl-(1-&gt;6)-beta-D-galactosyl]-sn-glycerol + octanoate + H(+). It catalyses the reaction 1,2-didodecanoyl-3-O-[alpha-D-galactosyl-(1-&gt;6)-beta-D-galactosyl]-sn-glycerol + H2O = dodecanoyl-3-O-[alpha-D-galactosyl-(1-&gt;6)-beta-D-galactosyl]-sn-glycerol + dodecanoate + H(+). The enzyme catalyses a 1,2-diacyl-sn-glycero-3-phosphocholine + H2O = a monoacyl-sn-glycero-3-phosphocholine + a fatty acid + H(+). It functions in the pathway glycerolipid metabolism; triacylglycerol degradation. Its pathway is glycolipid metabolism. With respect to regulation, CLPS stimulates triacylglycerol lipase activity. Triacylglycerol lipase activity is not inhibited by increasing bile salt concentration. Functionally, lipase that primarily hydrolyzes triglycerides and galactosylglycerides. In neonates, may play a major role in pancreatic digestion of dietary fats such as milk fat globules enriched in long-chain triglycerides. Hydrolyzes short-, medium- and long-chain fatty acyls in triglycerides without apparent positional specificity. Can completely deacylate triacylglycerols. When the liver matures and bile salt synthesis increases, likely functions mainly as a galactolipase and monoacylglycerol lipase. Hydrolyzes monogalactosyldiglycerols (MGDG) and digalactosyldiacylglycerols (DGDG) present in a plant-based diet, releasing long-chain polyunsaturated fatty acids. Hydrolyzes medium- and long-chain fatty acyls in galactolipids. May act together with LIPF to hydrolyze partially digested triglycerides. Hydrolyzes long-chain monoglycerides with high efficiency. In cytotoxic T cells, contributes to perforin-dependent cell lysis, but is unlikely to mediate direct cytotoxicity. Also has low phospholipase activity. In neurons, required for the localization of the phospholipid 1-oleoyl-2-palmitoyl-PC (OPPC) to neurite tips through acyl chain remodeling of membrane phospholipids. The resulting OPPC-rich lipid membrane domain recruits the t-SNARE protein STX4 by selectively interacting with the STX4 transmembrane domain and this promotes surface expression of the dopamine transporter SLC6A3/DAT at neurite tips by facilitating fusion of SLC6A3-containing transport vesicles with the plasma membrane. In Rattus norvegicus (Rat), this protein is Pancreatic lipase-related protein 2.